The sequence spans 459 residues: MKEFDTIAAISTAIGNSGISIIRVSGKEALSIVDKVFKGKSKKGIIEMNTYTMRYGNIVELSNGDIIDEVIVSFMKGPKSFTGENVVEVNCHGGMYPTKRVLEEIIRAGARLAEPGEFTKRAFLNGRLDLSQAEAVMDIINSKTELSMKSAVAQSEGVISREINKLRQRILEIIAHIEATVDYPEDDLEEVTAENVSKDLNDILKEIDELILSADEGKILREGLNTVIIGKPNVGKSSLLNLLLDEKRAIVTDIPGTTRDVIEEYINISGIPIKIVDTAGIRETEDVIEKMGVERSKEKMENADLIIFMIDSSKKIDAEDLEIIDYIKDKKYIVLLNKVDLKNREDKSKLDLLNKDNIIEFSVKEKVGLEKLKDTIENMFATGNLQHSNTMITNTRHKEALLRAREHCTTSLKALQDTLAIDLASIDIRNAWTALGEITGETLQEDLIDKIFKDFCLGK.

(6S)-5-formyl-5,6,7,8-tetrahydrofolate is bound by residues R23, E88, and R127. The TrmE-type G domain occupies 223-381 (GLNTVIIGKP…LKDTIENMFA (159 aa)). N233 is a K(+) binding site. Residues 233–238 (NVGKSS), 252–258 (TDIPGTT), and 277–280 (DTAG) contribute to the GTP site. S237 is a Mg(2+) binding site. T252, I254, and T257 together coordinate K(+). Mg(2+) is bound at residue T258. K459 is a (6S)-5-formyl-5,6,7,8-tetrahydrofolate binding site.

It belongs to the TRAFAC class TrmE-Era-EngA-EngB-Septin-like GTPase superfamily. TrmE GTPase family. In terms of assembly, homodimer. Heterotetramer of two MnmE and two MnmG subunits. The cofactor is K(+).

It is found in the cytoplasm. Exhibits a very high intrinsic GTPase hydrolysis rate. Involved in the addition of a carboxymethylaminomethyl (cmnm) group at the wobble position (U34) of certain tRNAs, forming tRNA-cmnm(5)s(2)U34. The chain is tRNA modification GTPase MnmE from Clostridium acetobutylicum (strain ATCC 824 / DSM 792 / JCM 1419 / IAM 19013 / LMG 5710 / NBRC 13948 / NRRL B-527 / VKM B-1787 / 2291 / W).